Reading from the N-terminus, the 113-residue chain is Ribosome-binding factor A (113 aa).

This sequence belongs to the RbfA family. Monomer. Binds 30S ribosomal subunits, but not 50S ribosomal subunits or 70S ribosomes.

The protein resides in the cytoplasm. In terms of biological role, one of several proteins that assist in the late maturation steps of the functional core of the 30S ribosomal subunit. Associates with free 30S ribosomal subunits (but not with 30S subunits that are part of 70S ribosomes or polysomes). Required for efficient processing of 16S rRNA. May interact with the 5'-terminal helix region of 16S rRNA. This is Ribosome-binding factor A from Lactococcus lactis subsp. cremoris (Streptococcus cremoris).